Reading from the N-terminus, the 708-residue chain is Polyribonucleotide nucleotidyltransferase (708 aa).

2 residues coordinate Mg(2+): D486 and D492. One can recognise a KH domain in the interval 553-612 (PRIIKFKINPEKIRDVIGKGGAVIRALTEETGTTIDISDDGSVTIACVSSEGGEQARKRI). One can recognise an S1 motif domain in the interval 622–690 (GRIYEGTVLK…EKGRLRLSMK (69 aa)).

This sequence belongs to the polyribonucleotide nucleotidyltransferase family. Requires Mg(2+) as cofactor.

The protein localises to the cytoplasm. It catalyses the reaction RNA(n+1) + phosphate = RNA(n) + a ribonucleoside 5'-diphosphate. Its function is as follows. Involved in mRNA degradation. Catalyzes the phosphorolysis of single-stranded polyribonucleotides processively in the 3'- to 5'-direction. In Nitrosomonas europaea (strain ATCC 19718 / CIP 103999 / KCTC 2705 / NBRC 14298), this protein is Polyribonucleotide nucleotidyltransferase.